The following is a 329-amino-acid chain: uncharacterized protein (329 aa).

This is an uncharacterized protein from Bacillus subtilis (strain 168).